The chain runs to 647 residues: Threonine--tRNA ligase (647 aa).

Residues 1 to 61 (MIKITFPDGA…EEDGSIEIVT (61 aa)) form the TGS domain. Residues 240-538 (DHRKLGKELD…LIETYKGAFP (299 aa)) are catalytic. Cysteine 334, histidine 385, and histidine 515 together coordinate Zn(2+).

This sequence belongs to the class-II aminoacyl-tRNA synthetase family. In terms of assembly, homodimer. Requires Zn(2+) as cofactor.

The protein resides in the cytoplasm. It carries out the reaction tRNA(Thr) + L-threonine + ATP = L-threonyl-tRNA(Thr) + AMP + diphosphate + H(+). Functionally, catalyzes the attachment of threonine to tRNA(Thr) in a two-step reaction: L-threonine is first activated by ATP to form Thr-AMP and then transferred to the acceptor end of tRNA(Thr). Also edits incorrectly charged L-seryl-tRNA(Thr). The polypeptide is Threonine--tRNA ligase (Streptococcus pyogenes serotype M28 (strain MGAS6180)).